The primary structure comprises 139 residues: UDP-glucose 4-epimerase (139 aa).

Residues 11–12 (YI), 31–36 (DNLCNS), 58–59 (DI), 80–84 (FAGLK), Asn-99, and Ser-124 contribute to the NAD(+) site. Ser-124 serves as a coordination point for substrate. Tyr-136 functions as the Proton acceptor in the catalytic mechanism.

Belongs to the NAD(P)-dependent epimerase/dehydratase family. In terms of assembly, homodimer. It depends on NAD(+) as a cofactor.

It carries out the reaction UDP-alpha-D-glucose = UDP-alpha-D-galactose. It participates in carbohydrate metabolism; galactose metabolism. Its function is as follows. Involved in the metabolism of galactose. Catalyzes the conversion of UDP-galactose (UDP-Gal) to UDP-glucose (UDP-Glc) through a mechanism involving the transient reduction of NAD. This chain is UDP-glucose 4-epimerase (galE), found in Klebsiella pneumoniae.